The sequence spans 194 residues: Peptidyl-tRNA hydrolase (194 aa).

Tyr-17 contacts tRNA. Residue His-22 is the Proton acceptor of the active site. The tRNA site is built by Phe-68, Asn-70, and Asn-116.

The protein belongs to the PTH family. Monomer.

The protein resides in the cytoplasm. The enzyme catalyses an N-acyl-L-alpha-aminoacyl-tRNA + H2O = an N-acyl-L-amino acid + a tRNA + H(+). Functionally, hydrolyzes ribosome-free peptidyl-tRNAs (with 1 or more amino acids incorporated), which drop off the ribosome during protein synthesis, or as a result of ribosome stalling. In terms of biological role, catalyzes the release of premature peptidyl moieties from peptidyl-tRNA molecules trapped in stalled 50S ribosomal subunits, and thus maintains levels of free tRNAs and 50S ribosomes. The sequence is that of Peptidyl-tRNA hydrolase from Actinobacillus pleuropneumoniae serotype 7 (strain AP76).